We begin with the raw amino-acid sequence, 183 residues long: Endoribonuclease YbeY (183 aa).

Zn(2+) contacts are provided by His118, His122, and His128. The interval Glu156–His183 is disordered.

The protein belongs to the endoribonuclease YbeY family. Zn(2+) is required as a cofactor.

The protein resides in the cytoplasm. Its function is as follows. Single strand-specific metallo-endoribonuclease involved in late-stage 70S ribosome quality control and in maturation of the 3' terminus of the 16S rRNA. This chain is Endoribonuclease YbeY, found in Saccharopolyspora erythraea (strain ATCC 11635 / DSM 40517 / JCM 4748 / NBRC 13426 / NCIMB 8594 / NRRL 2338).